Reading from the N-terminus, the 67-residue chain is Small ribosomal subunit protein eS17 (67 aa).

The protein belongs to the eukaryotic ribosomal protein eS17 family.

This is Small ribosomal subunit protein eS17 from Korarchaeum cryptofilum (strain OPF8).